We begin with the raw amino-acid sequence, 348 residues long: DNA ligase C1 (348 aa).

The active-site N6-AMP-lysine intermediate is Lys-32.

It belongs to the ATP-dependent DNA ligase family. The cofactor is a divalent metal cation.

It catalyses the reaction ATP + (deoxyribonucleotide)n-3'-hydroxyl + 5'-phospho-(deoxyribonucleotide)m = (deoxyribonucleotide)n+m + AMP + diphosphate.. In terms of biological role, DNA ligase that seals nicks in double-stranded DNA during DNA replication, DNA recombination and DNA repair. Has weak intrinsic nick joining activities and accumulates DNA-adenylate. Acts as a backup for LigD in the Ku-LigD-dependent NHEJ pathway. In Mycolicibacterium smegmatis (strain ATCC 700084 / mc(2)155) (Mycobacterium smegmatis), this protein is DNA ligase C1 (ligC).